Here is a 560-residue protein sequence, read N- to C-terminus: Solute carrier family 22 member 6 (560 aa).

Over 1-15 the chain is Cytoplasmic; the sequence is MAFSDLLEQVGSTGR. Residues 16–36 traverse the membrane as a helical segment; sequence FQVLHVTLLSMPILMMASHNL. Residues 37 to 143 lie on the Extracellular side of the membrane; the sequence is LQNFVAAVPP…LVCDYRALKQ (107 aa). The chain crosses the membrane as a helical span at residues 144–164; sequence MSQTTYMGGVLVGAIVFGGLS. Over 165–170 the chain is Cytoplasmic; sequence DRFGRR. The helical transmembrane segment at 171 to 191 threads the bilayer; that stretch reads VLLLISNLMMAIGGTCVAFST. The Extracellular portion of the chain corresponds to 192 to 201; it reads SFTMFCVFRV. The chain crosses the membrane as a helical span at residues 202 to 222; the sequence is CCGMALSGLVLNSFSLIVEWI. Residues 223–228 are Cytoplasmic-facing; the sequence is PTRVRT. Residues 229 to 249 traverse the membrane as a helical segment; that stretch reads VVGTGTGYCYTTGQLILAAVA. Residues 250–256 are Extracellular-facing; sequence YCIRDWR. Residues 257-277 form a helical membrane-spanning segment; sequence WLTLAVSLPFYVSFLYSWWFL. Topologically, residues 278 to 345 are cytoplasmic; sequence ESARWLVLTK…DLLRTSTMRT (68 aa). A helical membrane pass occupies residues 346-366; it reads ITICLSAVWFSTSFAYYGLSM. Residues 367–374 are Extracellular-facing; sequence DLQKFGVS. A helical membrane pass occupies residues 375–395; sequence IYLIQIIFGAVDIPAKIIVTI. Residues 396 to 406 are Cytoplasmic-facing; that stretch reads CMSMLGRRPSQ. The chain crosses the membrane as a helical span at residues 407–427; the sequence is CGALVLAGIMILINLLVPSDL. The Extracellular segment spans residues 428–433; sequence QMLRTS. A helical transmembrane segment spans residues 434-454; sequence LAVIGKGCLAASFNCCYLYAG. The Cytoplasmic portion of the chain corresponds to 455–465; the sequence is ELYPTVIRQSG. A helical membrane pass occupies residues 466 to 486; sequence MGWVSMMARFGAMVAPMVLLL. Residues 487–491 lie on the Extracellular side of the membrane; that stretch reads GDDYP. Residues 492-512 form a helical membrane-spanning segment; sequence WIPGFIYGGAPIVSGIFAFFL. Residues 513–560 lie on the Cytoplasmic side of the membrane; the sequence is PETLSQPLPDTIQDIDDRGLARTNSKRLPEKLDLAMKDPSCVLLKESV.

This sequence belongs to the major facilitator (TC 2.A.1) superfamily. Organic cation transporter (TC 2.A.1.19) family. In terms of processing, glycosylated. Glycosylation is necessary for proper targeting of the transporter to the plasma membrane.

It is found in the cell membrane. The protein resides in the basolateral cell membrane. It localises to the basal cell membrane. Functionally, involved in the renal elimination of endogenous and exogenous organic anions. Functions as organic anion exchanger when the uptake of one molecule of organic anion is coupled with an efflux of one molecule of endogenous dicarboxylic acid (glutarate, ketoglutarate, etc). Mediates the sodium-independent uptake of p-aminohippurate (PAH), 2,3-dimercapto-1-propanesulfonic acid (DMPS), cidofovir, adefovir, 9-(2-phosphonylmethoxyethyl) guanine (PMEG), 9-(2-phosphonylmethoxyethyl) diaminopurine (PMEDAP), ochratoxin (OTA), acyclovir (ACV), 3'-azido-3-'deoxythymidine (AZT), cimetidine (CMD), 2,4-dichloro-phenoxyacetate (2,4-D), hippurate (HA), indoleacetate (IA), indoxyl sulfate (IS) and 3-carboxy-4-methyl-5-propyl-2-furanpropionate (CMPF) and edaravone sulfate. PAH uptake is inhibited by p-chloromercuribenzenesulphonate (PCMBS), diethyl pyrocarbonate (DEPC), indomethacin, sulindac, diclofenac, carprofen, okadaic acid, benzothiazolylcysteine (BTC), S-chlorotrifluoroethylcysteine (CTFC), cysteine S-conjugates S-dichlorovinylcysteine (DCVC), furosemide, steviol, phorbol 12-myristate 13-acetate (PMA), calcium ionophore A23187, benzylpenicillin, bumetamide, losartan, probenecid, phenol red, urate, glutarate and alpha-ketoglutarate. This Danio rerio (Zebrafish) protein is Solute carrier family 22 member 6 (slc22a6).